The chain runs to 450 residues: Exodeoxyribonuclease 7 large subunit (450 aa).

This sequence belongs to the XseA family. As to quaternary structure, heterooligomer composed of large and small subunits.

It localises to the cytoplasm. It catalyses the reaction Exonucleolytic cleavage in either 5'- to 3'- or 3'- to 5'-direction to yield nucleoside 5'-phosphates.. Functionally, bidirectionally degrades single-stranded DNA into large acid-insoluble oligonucleotides, which are then degraded further into small acid-soluble oligonucleotides. The polypeptide is Exodeoxyribonuclease 7 large subunit (Rickettsia felis (strain ATCC VR-1525 / URRWXCal2) (Rickettsia azadi)).